We begin with the raw amino-acid sequence, 118 residues long: V-type proton ATPase subunit G 1 (118 aa).

Ala2 carries the post-translational modification N-acetylalanine.

Belongs to the V-ATPase G subunit family. As to quaternary structure, V-ATPase is a heteromultimeric enzyme made up of two complexes: the ATP-hydrolytic V1 complex and the proton translocation V0 complex. The V1 complex consists of three catalytic AB heterodimers that form a heterohexamer, three peripheral stalks each consisting of EG heterodimers, one central rotor including subunits D and F, and the regulatory subunits C and H. The proton translocation complex V0 consists of the proton transport subunit a, a ring of proteolipid subunits c9c'', rotary subunit d, subunits e and f, and the accessory subunits ATP6AP1/Ac45 and ATP6AP2/PRR. In terms of tissue distribution, kidney; localizes to early distal nephron, encompassing thick ascending limbs and distal convoluted tubules (at protein level). Ubiquitous.

It is found in the apical cell membrane. Its function is as follows. Subunit of the V1 complex of vacuolar(H+)-ATPase (V-ATPase), a multisubunit enzyme composed of a peripheral complex (V1) that hydrolyzes ATP and a membrane integral complex (V0) that translocates protons. V-ATPase is responsible for acidifying and maintaining the pH of intracellular compartments and in some cell types, is targeted to the plasma membrane, where it is responsible for acidifying the extracellular environment. In aerobic conditions, involved in intracellular iron homeostasis, thus triggering the activity of Fe(2+) prolyl hydroxylase (PHD) enzymes, and leading to HIF1A hydroxylation and subsequent proteasomal degradation. The protein is V-type proton ATPase subunit G 1 (ATP6V1G1) of Homo sapiens (Human).